Here is a 99-residue protein sequence, read N- to C-terminus: YcgL domain-containing protein HD_1373 (99 aa).

A YcgL domain is found at 8 to 92 (NFCAIYKSMS…PAENLLKQFL (85 aa)).

This is YcgL domain-containing protein HD_1373 from Haemophilus ducreyi (strain 35000HP / ATCC 700724).